The following is a 366-amino-acid chain: N-methyltransferase fsqC (366 aa).

An N-terminal signal peptide occupies residues 1 to 18 (MSSNVQDIRGWPPPFANA). Asn270 is a glycosylation site (N-linked (GlcNAc...) asparagine).

Belongs to the methyltransferase superfamily.

Its pathway is secondary metabolite biosynthesis. Its function is as follows. N-methyltransferase; part of the gene cluster that mediates the biosynthesis of the isoquinoline alkaloids fumisoquin A, fumisoquin B and fumisoquin C; as well as small amounts of fumipyrrole as a shunt metabolite. The products of the cluster lead to a brown coloration and are important for growth and conidiation. The nonribosomal peptide synthetase-like protein fsqF, which lacks a canonical condensation domain, is required for addition of a serine-derived dehydroalanine moiety to activated tyrosine but is not essential for the subsequent steps leading to isoquinoline formation. A different enzyme, most likely the ATP-grasp enzyme fsqD, is responsible for activation of tyrosine. Three additional enzymes encoded by the fsq cluster, the N-methyltransferase fsqC, the phenol 2-monooxygenase fsqG and the FAD-dependent oxidase fsqB, catalyze the formation of the isoquinoline ring system in the fumisoquins. FsqB converts the fspF thiolation domain-bound (2S,4S,5S)-2-amino-6-(3,4-dihydroxyphenyl)-4-hydroxy-5-(methylamino)hexanoyl into isoquinoline. The cyclization most likely proceeds via a two-step mechanism, beginning with FAD-dependent oxidation of the methyl group to an iminium species followed by electrophilic attack on the deprotonated phenol. This chain is N-methyltransferase fsqC, found in Aspergillus fumigatus (strain ATCC MYA-4609 / CBS 101355 / FGSC A1100 / Af293) (Neosartorya fumigata).